Consider the following 1010-residue polypeptide: Protein CROWDED NUCLEI 4 (1010 aa).

Coiled-coil stretches lie at residues 82–350 (LLLL…LIQN) and 404–763 (EKEH…NLER). Short sequence motifs (nuclear localization signal) lie at residues 445 to 452 (NRKTTMLE) and 679 to 686 (LKRLDAER). 3 disordered regions span residues 787 to 813 (GVSTVSNSEDGYNSSMERQNGLTPSSA), 839 to 937 (HYEE…TQTP), and 966 to 994 (DCSESPSEAGRKMGEETEDGDCNQTGINA). Over residues 849–863 (EKLKLESSRREEKAY) the composition is skewed to basic and acidic residues. Composition is skewed to polar residues over residues 883–893 (NTSGDETSEPS) and 912–921 (TQSVISSPQN).

It belongs to the CRWN family. Core component of the LINC complex which is composed of inner nuclear membrane SUN domain-containing proteins coupled to outer nuclear membrane WIP proteins, the nucleoskeletal CRWN/LINC proteins, and, possibly, KAKU4. Binds to KAKU4. In terms of tissue distribution, expressed at low levels in roots, leaves, flowers and flower stalks.

Its subcellular location is the nucleus membrane. It is found in the nucleus. It localises to the nucleoplasm. The protein localises to the nucleus lamina. The protein resides in the cytoplasm. In terms of biological role, component of SUN-protein-containing multivariate complexes also called LINC complexes which link the nucleoskeleton and cytoskeleton by providing versatile outer nuclear membrane attachment sites for cytoskeletal filaments. Required for nucleus structure organization (e.g. size and shape). Involved in the maintenance of interphase chromocenter integrity and organization. The sequence is that of Protein CROWDED NUCLEI 4 from Arabidopsis thaliana (Mouse-ear cress).